The following is a 797-amino-acid chain: Probable exo-1,4-beta-xylosidase bxlB (797 aa).

Positions 1–21 (MPLICIVYFLQYLDKIAISYA) are cleaved as a signal peptide. N-linked (GlcNAc...) asparagine glycans are attached at residues asparagine 86 and asparagine 126. Residue aspartate 312 is part of the active site. Asparagine 364, asparagine 431, asparagine 442, asparagine 483, asparagine 644, and asparagine 787 each carry an N-linked (GlcNAc...) asparagine glycan.

The protein belongs to the glycosyl hydrolase 3 family.

The protein localises to the secreted. It carries out the reaction Hydrolysis of (1-&gt;4)-beta-D-xylans, to remove successive D-xylose residues from the non-reducing termini.. The protein operates within glycan degradation; xylan degradation. In terms of biological role, xylan 1,4-beta-xylosidase involved in the hydrolysis of xylan, a major structural heterogeneous polysaccharide found in plant biomass representing the second most abundant polysaccharide in the biosphere, after cellulose. This is Probable exo-1,4-beta-xylosidase bxlB (bxlB) from Aspergillus oryzae (strain ATCC 42149 / RIB 40) (Yellow koji mold).